The primary structure comprises 260 residues: tRNA1(Val) (adenine(37)-N6)-methyltransferase (260 aa).

The protein belongs to the methyltransferase superfamily. tRNA (adenine-N(6)-)-methyltransferase family.

It localises to the cytoplasm. It catalyses the reaction adenosine(37) in tRNA1(Val) + S-adenosyl-L-methionine = N(6)-methyladenosine(37) in tRNA1(Val) + S-adenosyl-L-homocysteine + H(+). Functionally, specifically methylates the adenine in position 37 of tRNA(1)(Val) (anticodon cmo5UAC). The protein is tRNA1(Val) (adenine(37)-N6)-methyltransferase of Serratia proteamaculans (strain 568).